A 168-amino-acid chain; its full sequence is Nicotinamide-nucleotide adenylyltransferase (168 aa).

This sequence belongs to the archaeal NMN adenylyltransferase family.

The protein localises to the cytoplasm. The catalysed reaction is beta-nicotinamide D-ribonucleotide + ATP + H(+) = diphosphate + NAD(+). The protein operates within cofactor biosynthesis; NAD(+) biosynthesis; NAD(+) from nicotinamide D-ribonucleotide: step 1/1. In Methanocorpusculum labreanum (strain ATCC 43576 / DSM 4855 / Z), this protein is Nicotinamide-nucleotide adenylyltransferase.